Consider the following 229-residue polypeptide: Mannose-specific lectin TAR1 (229 aa).

A signal peptide spans 1–23 (MAKLLLFLLPAILGLLIPRSAVA). Bulb-type lectin domains follow at residues 26–131 (TNYL…PWVP) and 145–229 (DNLL…DYVL). Residues 51 to 55 (QNDCN), Tyr59, Trp63, Gln64, 170 to 174 (QGDCN), Tyr178, and 182 to 185 (YGWQ) contribute to the beta-D-mannose site. The Carbohydrate-binding motif 1 signature appears at 51 to 59 (QNDCNLVLY). Cystine bridges form between Cys54–Cys74 and Cys173–Cys195. A Carbohydrate-binding motif 2 motif is present at residues 170 to 178 (QGDCNLVLY).

Forms heterotetramer of 2 chains 1 and 2 chains 2 arranged as a dimer of chain 1 and chain 2 heterodimers.

Its subcellular location is the secreted. Functionally, mannose-specific lectin. Shows agglutinating activity towards erythrocytes from rabbit. The polypeptide is Mannose-specific lectin TAR1 (Colocasia esculenta (Wild taro)).